Here is a 416-residue protein sequence, read N- to C-terminus: NADH-quinone oxidoreductase subunit H (416 aa).

Helical transmembrane passes span 16-36 (LILA…LAAI), 84-104 (PVYL…FAVI), 124-144 (LAVA…GIVL), 165-185 (VVSY…YAGT), 197-217 (STWY…SMVG), 260-280 (VSAL…PISL), 288-308 (WWPL…YIWL), 320-340 (FMAI…MIVA), and 353-373 (WASG…VVLW).

The protein belongs to the complex I subunit 1 family. In terms of assembly, NDH-1 is composed of 14 different subunits. Subunits NuoA, H, J, K, L, M, N constitute the membrane sector of the complex.

It localises to the cell membrane. It carries out the reaction a quinone + NADH + 5 H(+)(in) = a quinol + NAD(+) + 4 H(+)(out). NDH-1 shuttles electrons from NADH, via FMN and iron-sulfur (Fe-S) centers, to quinones in the respiratory chain. The immediate electron acceptor for the enzyme in this species is believed to be menaquinone. Couples the redox reaction to proton translocation (for every two electrons transferred, four hydrogen ions are translocated across the cytoplasmic membrane), and thus conserves the redox energy in a proton gradient. This subunit may bind ubiquinone. The chain is NADH-quinone oxidoreductase subunit H from Mycobacterium sp. (strain JLS).